The primary structure comprises 154 residues: Aminoalkylphosphonate N-acetyltransferase (154 aa).

Positions 14 to 154 constitute an N-acetyltransferase domain; sequence CELRHATTED…QSHFRFTKAL (141 aa).

As to quaternary structure, homodimer. A divalent metal cation serves as cofactor.

The enzyme catalyses aminomethylphosphonate + acetyl-CoA = 2-N-acetamidomethylphosphonate + CoA. The catalysed reaction is (S)-1-aminoethylphosphonate + acetyl-CoA = [(1S)-1-acetamidoethyl]phosphonate + CoA. Aminoalkylphosphonate N-acetyltransferase which is able to acetylate a range of aminoalkylphosphonic acids, including (S)-1-aminoethylphosphonate ((S)-1AEP) and 2-aminoethylphosphonate, using acetyl-CoA as acetyl donor. Its physiological role in S.typhimurium is unclear. However, by acetylating (S)-1AEP, PhnO would protect against the deleterious effects of (S)-1AEP, a structural analog of D-alanine that has antibacterial properties. The polypeptide is Aminoalkylphosphonate N-acetyltransferase (Salmonella typhimurium (strain LT2 / SGSC1412 / ATCC 700720)).